A 245-amino-acid polypeptide reads, in one-letter code: 1-(5-phosphoribosyl)-5-[(5-phosphoribosylamino)methylideneamino] imidazole-4-carboxamide isomerase (245 aa).

D15 functions as the Proton acceptor in the catalytic mechanism. The active-site Proton donor is the D135.

This sequence belongs to the HisA/HisF family.

It is found in the cytoplasm. The enzyme catalyses 1-(5-phospho-beta-D-ribosyl)-5-[(5-phospho-beta-D-ribosylamino)methylideneamino]imidazole-4-carboxamide = 5-[(5-phospho-1-deoxy-D-ribulos-1-ylimino)methylamino]-1-(5-phospho-beta-D-ribosyl)imidazole-4-carboxamide. It participates in amino-acid biosynthesis; L-histidine biosynthesis; L-histidine from 5-phospho-alpha-D-ribose 1-diphosphate: step 4/9. The protein is 1-(5-phosphoribosyl)-5-[(5-phosphoribosylamino)methylideneamino] imidazole-4-carboxamide isomerase of Haloquadratum walsbyi (strain DSM 16790 / HBSQ001).